A 93-amino-acid polypeptide reads, in one-letter code: Small ribosomal subunit protein uS19 (93 aa).

It belongs to the universal ribosomal protein uS19 family.

Protein S19 forms a complex with S13 that binds strongly to the 16S ribosomal RNA. This Ehrlichia ruminantium (strain Welgevonden) protein is Small ribosomal subunit protein uS19.